Here is a 593-residue protein sequence, read N- to C-terminus: Aspartate--tRNA ligase (593 aa).

Glu-180 lines the L-aspartate pocket. The aspartate stretch occupies residues 204-207 (QIFK). An L-aspartate-binding site is contributed by Arg-226. Residues 226-228 (RDE) and Gln-235 each bind ATP. His-453 provides a ligand contact to L-aspartate. Residue Glu-487 participates in ATP binding. Arg-494 is an L-aspartate binding site. 539-542 (GLDR) lines the ATP pocket.

This sequence belongs to the class-II aminoacyl-tRNA synthetase family. Type 1 subfamily. As to quaternary structure, homodimer.

It localises to the cytoplasm. The catalysed reaction is tRNA(Asp) + L-aspartate + ATP = L-aspartyl-tRNA(Asp) + AMP + diphosphate. Its function is as follows. Catalyzes the attachment of L-aspartate to tRNA(Asp) in a two-step reaction: L-aspartate is first activated by ATP to form Asp-AMP and then transferred to the acceptor end of tRNA(Asp). This is Aspartate--tRNA ligase from Clostridium botulinum (strain Okra / Type B1).